The primary structure comprises 132 residues: S-protein homolog 15 (132 aa).

Residues 1–20 (MSRLIFFILVTAIYFVGNEA) form the signal peptide.

Belongs to the plant self-incompatibility (S1) protein family.

Its subcellular location is the secreted. This chain is S-protein homolog 15, found in Arabidopsis thaliana (Mouse-ear cress).